The chain runs to 140 residues: Trafficking protein particle complex subunit 2-like protein (140 aa).

It belongs to the TRAPP small subunits family. Sedlin subfamily.

This is Trafficking protein particle complex subunit 2-like protein (trappc2l) from Dictyostelium discoideum (Social amoeba).